Here is a 539-residue protein sequence, read N- to C-terminus: Chaperonin GroEL (539 aa).

ATP-binding positions include 29–32, 86–90, Gly-413, 476–478, and Asp-492; these read TLGP, DGTTT, and NAA.

Belongs to the chaperonin (HSP60) family. Forms a cylinder of 14 subunits composed of two heptameric rings stacked back-to-back. Interacts with the co-chaperonin GroES.

It localises to the cytoplasm. It carries out the reaction ATP + H2O + a folded polypeptide = ADP + phosphate + an unfolded polypeptide.. Together with its co-chaperonin GroES, plays an essential role in assisting protein folding. The GroEL-GroES system forms a nano-cage that allows encapsulation of the non-native substrate proteins and provides a physical environment optimized to promote and accelerate protein folding. This is Chaperonin GroEL from Geobacillus sp. (strain WCH70).